The sequence spans 552 residues: Outer dynein arm protein 1 (552 aa).

The tract at residues 1–27 (MPSADATRGGGSAGSMGKGTLGAGDTL) is disordered. Positions 8–22 (RGGGSAGSMGKGTLG) are enriched in gly residues. Coiled coils occupy residues 28 to 59 (GHKSVLDKQRAAIEKLRAQNEQLKTELLLENK), 120 to 260 (SAKE…QELL), and 331 to 395 (TLFN…YEKR). Disordered regions lie at residues 482–515 (NRIIIEPPSTTQEEEVEGLEPEPVEEDRPLTREH) and 528–552 (LETAIKVRPAGADATGGKRGSPTRR). Positions 493–506 (QEEEVEGLEPEPVE) are enriched in acidic residues.

It belongs to the ODA1/DCC2 family. In terms of assembly, component of the outer dynein arm complex.

The protein resides in the cytoplasm. It localises to the cytoskeleton. Its subcellular location is the cilium axoneme. In terms of biological role, component of the outer dynein arm complex required for assembly of the outer dynein arm-docking complex (ODA-DC) and the outer dynein arm onto the doublet microtubule. This Chlamydomonas reinhardtii (Chlamydomonas smithii) protein is Outer dynein arm protein 1 (ODA1).